Consider the following 428-residue polypeptide: GTPase Obg (428 aa).

The Obg domain occupies 1-158 (MFVDQVKIYV…RDVILELKVL (158 aa)). Residues 159–329 (ADVGLVGFPS…LLFEVANLIE (171 aa)) enclose the OBG-type G domain. Residues 165–172 (GFPSVGKS), 190–194 (FTTIV), 212–215 (DLPG), 282–285 (NKMD), and 310–312 (SAV) contribute to the GTP site. Mg(2+) contacts are provided by S172 and T192. The region spanning 350–428 (KFDTEGVKFE…ILEYEFEFID (79 aa)) is the OCT domain.

Belongs to the TRAFAC class OBG-HflX-like GTPase superfamily. OBG GTPase family. As to quaternary structure, monomer. Mg(2+) is required as a cofactor.

It is found in the cytoplasm. In terms of biological role, an essential GTPase which binds GTP, GDP and possibly (p)ppGpp with moderate affinity, with high nucleotide exchange rates and a fairly low GTP hydrolysis rate. Plays a role in control of the cell cycle, stress response, ribosome biogenesis and in those bacteria that undergo differentiation, in morphogenesis control. This is GTPase Obg from Bacillus cereus (strain ATCC 14579 / DSM 31 / CCUG 7414 / JCM 2152 / NBRC 15305 / NCIMB 9373 / NCTC 2599 / NRRL B-3711).